The sequence spans 175 residues: Hypoxanthine-guanine phosphoribosyltransferase (175 aa).

The diphosphate site is built by lysine 40 and glycine 41. Positions 96 and 97 each coordinate Mg(2+). Aspartate 100 functions as the Proton acceptor in the catalytic mechanism. Residues lysine 128, 149-150 (FL), and aspartate 156 each bind GMP. Residue arginine 162 coordinates diphosphate.

This sequence belongs to the purine/pyrimidine phosphoribosyltransferase family. The cofactor is Mg(2+).

The protein localises to the cytoplasm. It carries out the reaction IMP + diphosphate = hypoxanthine + 5-phospho-alpha-D-ribose 1-diphosphate. The enzyme catalyses GMP + diphosphate = guanine + 5-phospho-alpha-D-ribose 1-diphosphate. It participates in purine metabolism; IMP biosynthesis via salvage pathway; IMP from hypoxanthine: step 1/1. Its pathway is purine metabolism; GMP biosynthesis via salvage pathway; GMP from guanine: step 1/1. Its function is as follows. Purine salvage pathway enzyme that catalyzes the transfer of the ribosyl-5-phosphate group from 5-phospho-alpha-D-ribose 1-diphosphate (PRPP) to the N9 position of the 6-oxopurines hypoxanthine and guanine to form the corresponding ribonucleotides IMP (inosine 5'-monophosphate) and GMP (guanosine 5'-monophosphate), with the release of PPi. This Mycoplasma genitalium (strain ATCC 33530 / DSM 19775 / NCTC 10195 / G37) (Mycoplasmoides genitalium) protein is Hypoxanthine-guanine phosphoribosyltransferase (hpt).